We begin with the raw amino-acid sequence, 38 residues long: Phospholipase A2 1 (38 aa).

Residues Tyr28, Gly30, and Gly32 each contribute to the Ca(2+) site.

This sequence belongs to the phospholipase A2 family. Group I subfamily. Ca(2+) is required as a cofactor. As to expression, expressed by the venom gland.

It is found in the secreted. The enzyme catalyses a 1,2-diacyl-sn-glycero-3-phosphocholine + H2O = a 1-acyl-sn-glycero-3-phosphocholine + a fatty acid + H(+). Functionally, snake venom phospholipase A2 (PLA2) that inhibits neuromuscular transmission by blocking acetylcholine release from the nerve termini. PLA2 catalyzes the calcium-dependent hydrolysis of the 2-acyl groups in 3-sn-phosphoglycerides. This is Phospholipase A2 1 from Calliophis bivirgatus (Blue Malaysian coral snake).